We begin with the raw amino-acid sequence, 386 residues long: S-adenosylmethionine synthase (386 aa).

H14 contacts ATP. Position 16 (D16) interacts with Mg(2+). K(+) is bound at residue E42. E55 and Q98 together coordinate L-methionine. The tract at residues 98–108 (QSGDISQGVDG) is flexible loop. ATP is bound by residues 162-164 (DSK), 230-231 (RF), D239, 245-246 (RK), A262, and K266. D239 is an L-methionine binding site. Position 270 (K270) interacts with L-methionine.

This sequence belongs to the AdoMet synthase family. In terms of assembly, homotetramer; dimer of dimers. The cofactor is Mg(2+). Requires K(+) as cofactor.

It localises to the cytoplasm. The enzyme catalyses L-methionine + ATP + H2O = S-adenosyl-L-methionine + phosphate + diphosphate. It functions in the pathway amino-acid biosynthesis; S-adenosyl-L-methionine biosynthesis; S-adenosyl-L-methionine from L-methionine: step 1/1. Functionally, catalyzes the formation of S-adenosylmethionine (AdoMet) from methionine and ATP. The overall synthetic reaction is composed of two sequential steps, AdoMet formation and the subsequent tripolyphosphate hydrolysis which occurs prior to release of AdoMet from the enzyme. The protein is S-adenosylmethionine synthase of Salinibacter ruber (strain DSM 13855 / M31).